A 558-amino-acid polypeptide reads, in one-letter code: Aspartate--tRNA ligase 2, cytoplasmic (558 aa).

A compositionally biased stretch (low complexity) spans 1–18; that stretch reads MSSESEIPPLSSSTAAAE. The disordered stretch occupies residues 1–57; the sequence is MSSESEIPPLSSSTAAAEESGEKTSKKAAKKEAAKLEKLRRRQEQEEATRRTASISL. Position 2 is an N-acetylserine (serine 2). A compositionally biased stretch (basic and acidic residues) spans 20–50; that stretch reads SGEKTSKKAAKKEAAKLEKLRRRQEQEEATR. A DNA-binding region (OB) is located at residues 110-195; sequence VLIRGRVHTN…QVEIQVRKVY (86 aa). Position 286 (glutamate 286) interacts with L-aspartate. Residues 308 to 311 form an aspartate region; sequence QLHK. Arginine 330 is a binding site for L-aspartate. ATP-binding positions include 330–332, 338–340, and glutamate 481; these read RAE and RHL. Residues glutamate 481 and serine 484 each contribute to the Mg(2+) site. Residues serine 484 and arginine 488 each coordinate L-aspartate. Residue 529 to 532 coordinates ATP; the sequence is GLER.

This sequence belongs to the class-II aminoacyl-tRNA synthetase family. Type 2 subfamily.

The protein resides in the cytoplasm. It localises to the cytosol. Its subcellular location is the endoplasmic reticulum. The catalysed reaction is tRNA(Asp) + L-aspartate + ATP = L-aspartyl-tRNA(Asp) + AMP + diphosphate. Its function is as follows. Catalyzes the specific attachment of an amino acid to its cognate tRNA in a 2 step reaction: the amino acid (AA) is first activated by ATP to form AA-AMP and then transferred to the acceptor end of the tRNA. Involved in the perception of beta-aminobutyric acid (BABA) and required for BABA priming effect in disease resistance. The sequence is that of Aspartate--tRNA ligase 2, cytoplasmic from Arabidopsis thaliana (Mouse-ear cress).